The sequence spans 116 residues: MTELAQQKCQPYQSGSSPITAEEITALQAKIPDWNLLEYEGIPRLQKLYKFANFQGAIAFTNAVGEAAEKEGHHPALLTEWGKVTVSWWTHDVGGLHQNDFIMAARTDDIYRQQNA.

The protein belongs to the pterin-4-alpha-carbinolamine dehydratase family.

The enzyme catalyses (4aS,6R)-4a-hydroxy-L-erythro-5,6,7,8-tetrahydrobiopterin = (6R)-L-erythro-6,7-dihydrobiopterin + H2O. In Microcystis aeruginosa (strain NIES-843 / IAM M-2473), this protein is Putative pterin-4-alpha-carbinolamine dehydratase.